The sequence spans 259 residues: Dihydroorotate dehydrogenase B (NAD(+)), electron transfer subunit (259 aa).

The region spanning 2 to 102 is the FAD-binding FR-type domain; that stretch reads MQKQNMIVVN…LGPLGHGFPV (101 aa). FAD-binding positions include 53 to 56, 70 to 72, and 77 to 78; these read RPIS, LYR, and GT. The [2Fe-2S] cluster site is built by Cys221, Cys226, Cys229, and Cys246.

Belongs to the PyrK family. As to quaternary structure, heterotetramer of 2 PyrK and 2 PyrD type B subunits. Requires [2Fe-2S] cluster as cofactor. FAD is required as a cofactor.

The protein operates within pyrimidine metabolism; UMP biosynthesis via de novo pathway; orotate from (S)-dihydroorotate (NAD(+) route): step 1/1. In terms of biological role, responsible for channeling the electrons from the oxidation of dihydroorotate from the FMN redox center in the PyrD type B subunit to the ultimate electron acceptor NAD(+). The protein is Dihydroorotate dehydrogenase B (NAD(+)), electron transfer subunit of Bacillus mycoides (strain KBAB4) (Bacillus weihenstephanensis).